The following is a 177-amino-acid chain: Large ribosomal subunit protein uL6 (177 aa).

The protein belongs to the universal ribosomal protein uL6 family. In terms of assembly, part of the 50S ribosomal subunit.

Functionally, this protein binds to the 23S rRNA, and is important in its secondary structure. It is located near the subunit interface in the base of the L7/L12 stalk, and near the tRNA binding site of the peptidyltransferase center. This Pseudomonas putida (strain ATCC 700007 / DSM 6899 / JCM 31910 / BCRC 17059 / LMG 24140 / F1) protein is Large ribosomal subunit protein uL6.